The following is a 128-amino-acid chain: Flagellar assembly factor FliW (128 aa).

The protein belongs to the FliW family. In terms of assembly, interacts with translational regulator CsrA and flagellin(s).

The protein localises to the cytoplasm. Its function is as follows. Acts as an anti-CsrA protein, binds CsrA and prevents it from repressing translation of its target genes, one of which is flagellin. Binds to flagellin and participates in the assembly of the flagellum. This is Flagellar assembly factor FliW from Campylobacter fetus subsp. fetus (strain 82-40).